Consider the following 199-residue polypeptide: Superoxide dismutase [Mn] (199 aa).

Residues His-27, His-76, Asp-160, and His-164 each coordinate Mn(2+).

The protein belongs to the iron/manganese superoxide dismutase family. Requires Mn(2+) as cofactor.

The enzyme catalyses 2 superoxide + 2 H(+) = H2O2 + O2. In terms of biological role, destroys superoxide anion radicals which are normally produced within the cells and which are toxic to biological systems. The sequence is that of Superoxide dismutase [Mn] (sodA) from Corynebacterium diphtheriae (strain ATCC 700971 / NCTC 13129 / Biotype gravis).